A 430-amino-acid polypeptide reads, in one-letter code: Arrestin-related trafficking adapter 10 (430 aa).

A disordered region spans residues 55-75; it reads AEADRHSSRLPQDPQTQYTKE. Residues 63-72 show a composition bias toward polar residues; the sequence is RLPQDPQTQY.

It belongs to the ART10 family.

It is found in the cytoplasm. In terms of biological role, may regulate endocytosis by recruiting RSP5 ubiquitin ligase activity to specific plasma membrane proteins in response to extracellular stimuli. The polypeptide is Arrestin-related trafficking adapter 10 (ART10) (Eremothecium gossypii (strain ATCC 10895 / CBS 109.51 / FGSC 9923 / NRRL Y-1056) (Yeast)).